We begin with the raw amino-acid sequence, 322 residues long: Phosphatidylserine decarboxylase proenzyme (322 aa).

Active-site charge relay system; for autoendoproteolytic cleavage activity residues include aspartate 90, histidine 147, and serine 254. The active-site Schiff-base intermediate with substrate; via pyruvic acid; for decarboxylase activity is serine 254. Residue serine 254 is modified to Pyruvic acid (Ser); by autocatalysis.

The protein belongs to the phosphatidylserine decarboxylase family. PSD-B subfamily. Prokaryotic type I sub-subfamily. Heterodimer of a large membrane-associated beta subunit and a small pyruvoyl-containing alpha subunit. The cofactor is pyruvate. In terms of processing, is synthesized initially as an inactive proenzyme. Formation of the active enzyme involves a self-maturation process in which the active site pyruvoyl group is generated from an internal serine residue via an autocatalytic post-translational modification. Two non-identical subunits are generated from the proenzyme in this reaction, and the pyruvate is formed at the N-terminus of the alpha chain, which is derived from the carboxyl end of the proenzyme. The autoendoproteolytic cleavage occurs by a canonical serine protease mechanism, in which the side chain hydroxyl group of the serine supplies its oxygen atom to form the C-terminus of the beta chain, while the remainder of the serine residue undergoes an oxidative deamination to produce ammonia and the pyruvoyl prosthetic group on the alpha chain. During this reaction, the Ser that is part of the protease active site of the proenzyme becomes the pyruvoyl prosthetic group, which constitutes an essential element of the active site of the mature decarboxylase.

It localises to the cell membrane. It catalyses the reaction a 1,2-diacyl-sn-glycero-3-phospho-L-serine + H(+) = a 1,2-diacyl-sn-glycero-3-phosphoethanolamine + CO2. The protein operates within phospholipid metabolism; phosphatidylethanolamine biosynthesis; phosphatidylethanolamine from CDP-diacylglycerol: step 2/2. In terms of biological role, catalyzes the formation of phosphatidylethanolamine (PtdEtn) from phosphatidylserine (PtdSer). The chain is Phosphatidylserine decarboxylase proenzyme from Shigella dysenteriae serotype 1 (strain Sd197).